Here is a 92-residue protein sequence, read N- to C-terminus: MASLGRKFFAVGVLSRVFPSAFNAQKGLLKNASMFLTPAFRLSPSLLPWNFSRGFKVKASVKKRCSSCYFVRRKGRLYVLCKKHPRHKTRQG.

Residues 1–54 constitute a mitochondrion transit peptide; sequence MASLGRKFFAVGVLSRVFPSAFNAQKGLLKNASMFLTPAFRLSPSLLPWNFSRG.

Belongs to the bacterial ribosomal protein bL36 family. As to quaternary structure, component of the mitochondrial large ribosomal subunit (mt-LSU). Mature yeast 74S mitochondrial ribosomes consist of a small (37S) and a large (54S) subunit. The 37S small subunit contains a 15S ribosomal RNA (15S mt-rRNA) and at least 32 different proteins. The 54S large subunit contains a 21S rRNA (21S mt-rRNA) and at least 45 different proteins. bL36m has a zinc binding site.

The protein localises to the mitochondrion. Functionally, component of the mitochondrial ribosome (mitoribosome), a dedicated translation machinery responsible for the synthesis of mitochondrial genome-encoded proteins, including at least some of the essential transmembrane subunits of the mitochondrial respiratory chain. The mitoribosomes are attached to the mitochondrial inner membrane and translation products are cotranslationally integrated into the membrane. bL36m may be involved in a process influencing telomere capping. This chain is Large ribosomal subunit protein bL36m (rtc6), found in Schizosaccharomyces pombe (strain 972 / ATCC 24843) (Fission yeast).